Reading from the N-terminus, the 257-residue chain is MSDRKRVYGPSVSVPPYFEEPEQPVFTRTRDVDRCRKIYLKLGWATKAVGSSYFESEKIKIACTVSGPRPSKTFAFRSSAKLNCEFRLSPFSTSVRQGHVQTVEEKSYSQMIEAAISPSILLHLYPKSSIDVYIQVIESDGALATLAAAISCASSAIADANIDCIDLVTGSSVLFNPNTDEYWIDPDYVDERARAAKGSVVMGYMASLGHVTQVWERGTCSPSRLSFLTEKCIKNAKDTRLVINHALLLEKSKSEDP.

This sequence belongs to the RNase PH family. In terms of assembly, component of the RNA exosome complex. Specifically part of the catalytically inactive RNA exosome core complex (Exo-9) may associate with the catalytic subunits rrp6 and dis3 in cytoplasmic- and nuclear-specific RNA exosome complex forms. Exo-9 is formed by a hexameric base ring of RNase PH domain-containing subunits and a cap ring consisting of csl4, rrp4 and rrp40.

Its subcellular location is the cytoplasm. It localises to the nucleus. The protein resides in the nucleolus. Functionally, non-catalytic component of the RNA exosome complex which has 3'-&gt;5' exoribonuclease activity and participates in a multitude of cellular RNA processing and degradation events. In the nucleus, the RNA exosome complex is involved in proper maturation of stable RNA species such as rRNA, snRNA and snoRNA, in the elimination of RNA processing by-products and non-coding 'pervasive' transcripts, such as antisense RNA species and cryptic unstable transcripts (CUTs), and of mRNAs with processing defects, thereby limiting or excluding their export to the cytoplasm. In the cytoplasm, the RNA exosome complex is involved in general mRNA turnover and in RNA surveillance pathways, preventing translation of aberrant mRNAs. The catalytic inactive RNA exosome core complex of 9 subunits (Exo-9) is proposed to play a pivotal role in the binding and presentation of RNA for ribonucleolysis, and to serve as a scaffold for the association with catalytic subunits and accessory proteins or complexes. ski6 is part of the hexameric ring of RNase PH domain-containing subunits proposed to form a central channel which threads RNA substrates for degradation. The sequence is that of Exosome complex component mtr3 (mtr3) from Schizosaccharomyces pombe (strain 972 / ATCC 24843) (Fission yeast).